The chain runs to 339 residues: Fructose-1,6-bisphosphatase isozyme 2 (339 aa).

The interval 3–10 (DRSPFETD) is important for interaction with ALDOA. AMP-binding positions include Val-18 and 28–32 (TGELT). Residues Asp-69 and Glu-98 each coordinate Mg(2+). Residue 113–114 (KY) coordinates AMP. Mg(2+) contacts are provided by Asp-119, Leu-121, and Asp-122. Asp-122 contacts substrate. Arg-141 serves as a coordination point for AMP. The Nuclear localization signal motif lies at 204-208 (KKKGK). A substrate-binding site is contributed by 213-216 (NEGY). Tyr-216 and Tyr-219 each carry phosphotyrosine. Residues 245–249 (YVGSM), Tyr-265, and Lys-275 contribute to the substrate site. Glu-281 provides a ligand contact to Mg(2+).

It belongs to the FBPase class 1 family. In terms of assembly, homotetramer. Interacts with ALDOA; the interaction blocks inhibition by physiological concentrations of AMP and reduces inhibition by Ca(2+). Interacts with alpha-actinin and F-actin. Mg(2+) serves as cofactor.

It localises to the cell junction. The protein localises to the cytoplasm. The protein resides in the nucleus. It is found in the myofibril. Its subcellular location is the sarcomere. It localises to the z line. It carries out the reaction beta-D-fructose 1,6-bisphosphate + H2O = beta-D-fructose 6-phosphate + phosphate. The protein operates within carbohydrate biosynthesis; gluconeogenesis. Its activity is regulated as follows. Subject to complex allosteric regulation. The enzyme can assume an active R-state, or an inactive T-state. Intermediate conformations may exist. AMP acts as an allosteric inhibitor. Fructose 2,6-bisphosphate acts as a competitive inhibitor. Strongly inhibited by Ca(2+). Its function is as follows. Catalyzes the hydrolysis of fructose 1,6-bisphosphate to fructose 6-phosphate in the presence of divalent cations and probably participates in glycogen synthesis from carbohydrate precursors, such as lactate. The protein is Fructose-1,6-bisphosphatase isozyme 2 (FBP2) of Oryctolagus cuniculus (Rabbit).